Reading from the N-terminus, the 430-residue chain is Histidine--tRNA ligase (430 aa).

This sequence belongs to the class-II aminoacyl-tRNA synthetase family. Homodimer.

The protein localises to the cytoplasm. The enzyme catalyses tRNA(His) + L-histidine + ATP = L-histidyl-tRNA(His) + AMP + diphosphate + H(+). This is Histidine--tRNA ligase (hisS) from Clostridium acetobutylicum (strain ATCC 824 / DSM 792 / JCM 1419 / IAM 19013 / LMG 5710 / NBRC 13948 / NRRL B-527 / VKM B-1787 / 2291 / W).